Consider the following 101-residue polypeptide: Hg-scorpine-like-2 (101 aa).

An N-terminal signal peptide occupies residues 1–17; it reads MKLTILILLVITSFCSC. In terms of domain architecture, BetaSPN-type CS-alpha/beta spans 60-100; it reads QQLCMFNKDVAGWCEKSCQQSAHQKGYCHGTKCKCGIPLNY. 3 disulfides stabilise this stretch: Cys63–Cys87, Cys73–Cys92, and Cys77–Cys94.

Belongs to the long chain scorpion toxin family. Class 3 subfamily. As to expression, expressed by the venom gland.

The protein localises to the secreted. Inhibits voltage-gated potassium channels. This is Hg-scorpine-like-2 from Hoffmannihadrurus gertschi (Scorpion).